The sequence spans 368 residues: Glutamate 5-kinase (368 aa).

K9 provides a ligand contact to ATP. Substrate contacts are provided by S49, D136, and N148. ATP is bound by residues 168-169 and 210-216; these read TD and TGGMMTK. The PUA domain occupies 275 to 353; that stretch reads AGIITIDNGA…ADIENVLGYE (79 aa).

The protein belongs to the glutamate 5-kinase family.

The protein resides in the cytoplasm. The enzyme catalyses L-glutamate + ATP = L-glutamyl 5-phosphate + ADP. Its pathway is amino-acid biosynthesis; L-proline biosynthesis; L-glutamate 5-semialdehyde from L-glutamate: step 1/2. Its function is as follows. Catalyzes the transfer of a phosphate group to glutamate to form L-glutamate 5-phosphate. The sequence is that of Glutamate 5-kinase from Haemophilus influenzae (strain PittEE).